We begin with the raw amino-acid sequence, 797 residues long: LPS-assembly protein LptD (797 aa).

The signal sequence occupies residues Met-1–Ala-20. The segment at Ser-23–Pro-45 is disordered.

It belongs to the LptD family. As to quaternary structure, component of the lipopolysaccharide transport and assembly complex. Interacts with LptE and LptA.

The protein localises to the cell outer membrane. Together with LptE, is involved in the assembly of lipopolysaccharide (LPS) at the surface of the outer membrane. The sequence is that of LPS-assembly protein LptD from Bordetella avium (strain 197N).